A 454-amino-acid polypeptide reads, in one-letter code: MSSSSREGSPDWLRSYEAPMTTSLLSLSSSDDDSPYRESEVISSLPLPDDDGDDIVVLETESVELLTRKNSETKVVTKQVSIEQVFSRKKKADASLNLEDSCAGKENGNNVDCEKLSSKHKDAQGGADSVWLVSSDSEPSSPIKQEVTVSTEKDADFVLEATEEEPAVKTVRKEKSPKTKSKSSRKTPKEGNSAQEILKTEDKDTDTTIAEQVTPEKSPKTKSKSSRKTPKEENCAQEILKTEDKDKDTDTDTIIAEEVTTDQKIKPSSGSSSRLPLVLSEKVNRTKVLVECEGDSIDLSGDMGAVGRVVVSDTTGDMYLDLKGTIYKSTIIPSRTFCVVNVGQTEAKIEAIMNDFIQLIPQSNVYEAETMVEGTLEGFTFESDDESNKNAKTAVKPADQSVGTEEETNTKAKPKAKAKGETVIGKKRGRPSKEKQPPAKKARNSAPKKPKAKK.

Disordered stretches follow at residues 24 to 53, 103 to 249, and 380 to 454; these read LLSL…DDGD, AGKE…DKDT, and TFES…KAKK. The segment covering 112 to 123 has biased composition (basic and acidic residues); it reads DCEKLSSKHKDA. Residues 132–150 show a composition bias toward polar residues; the sequence is LVSSDSEPSSPIKQEVTVS. Basic and acidic residues predominate over residues 229-249; the sequence is TPKEENCAQEILKTEDKDKDT. The span at 438-454 shows a compositional bias: basic residues; that stretch reads PAKKARNSAPKKPKAKK.

As to quaternary structure, interacts with TOP6A, RHL1 and itself, but not with TOP6B. Expressed in expanding cotyledons, vascular cells, elongating root cells, developing leaf trichomes, root and apical meristems and lateral root primordia.

The protein localises to the nucleus. Component of the DNA topoisomerase VI complex. Binds to DNA. Required for chromatin organization and progression of endoreduplication cycles. The loss of BIN4 activates the ATM- and ATR-dependent DNA damage responses in postmitotic cells and induces the ectopic expression of the mitotic G2/M-specific cyclin B1;1 gene in non-dividing cells. The chain is DNA-binding protein BIN4 (BIN4) from Arabidopsis thaliana (Mouse-ear cress).